A 124-amino-acid polypeptide reads, in one-letter code: Small ribosomal subunit protein uS12 (124 aa).

Position 89 is a 3-methylthioaspartic acid (aspartate 89).

The protein belongs to the universal ribosomal protein uS12 family. Part of the 30S ribosomal subunit. Contacts proteins S8 and S17. May interact with IF1 in the 30S initiation complex.

Functionally, with S4 and S5 plays an important role in translational accuracy. Interacts with and stabilizes bases of the 16S rRNA that are involved in tRNA selection in the A site and with the mRNA backbone. Located at the interface of the 30S and 50S subunits, it traverses the body of the 30S subunit contacting proteins on the other side and probably holding the rRNA structure together. The combined cluster of proteins S8, S12 and S17 appears to hold together the shoulder and platform of the 30S subunit. The sequence is that of Small ribosomal subunit protein uS12 from Baumannia cicadellinicola subsp. Homalodisca coagulata.